Reading from the N-terminus, the 237-residue chain is Mitochondrial inner membrane protease atp23 (237 aa).

An a divalent metal cation-binding site is contributed by histidine 136. Glutamate 137 is a catalytic residue. Histidine 140 contributes to the a divalent metal cation binding site.

This sequence belongs to the peptidase M76 family.

The protein localises to the mitochondrion inner membrane. Has a dual role in the assembly of mitochondrial ATPase. Acts as a protease that removes N-terminal residues of mitochondrial ATPase CF(0) subunit 6 at the intermembrane space side. Also involved in the correct assembly of the membrane-embedded ATPase CF(0) particle, probably mediating association of subunit 6 with the subunit 9 ring. This chain is Mitochondrial inner membrane protease atp23 (atp23), found in Aspergillus clavatus (strain ATCC 1007 / CBS 513.65 / DSM 816 / NCTC 3887 / NRRL 1 / QM 1276 / 107).